Reading from the N-terminus, the 98-residue chain is Small ribosomal subunit protein bS16 (98 aa).

It belongs to the bacterial ribosomal protein bS16 family.

The sequence is that of Small ribosomal subunit protein bS16 from Pseudothermotoga lettingae (strain ATCC BAA-301 / DSM 14385 / NBRC 107922 / TMO) (Thermotoga lettingae).